The chain runs to 488 residues: 3-octaprenyl-4-hydroxybenzoate carboxy-lyase (488 aa).

N172 serves as a coordination point for Mn(2+). Prenylated FMN is bound by residues 175–177, 189–191, and 194–195; these read IYR, RWL, and RG. E238 serves as a coordination point for Mn(2+). D287 serves as the catalytic Proton donor.

The protein belongs to the UbiD family. As to quaternary structure, homohexamer. Prenylated FMN serves as cofactor. It depends on Mn(2+) as a cofactor.

The protein resides in the cell membrane. The catalysed reaction is a 4-hydroxy-3-(all-trans-polyprenyl)benzoate + H(+) = a 2-(all-trans-polyprenyl)phenol + CO2. It functions in the pathway cofactor biosynthesis; ubiquinone biosynthesis. Its function is as follows. Catalyzes the decarboxylation of 3-octaprenyl-4-hydroxy benzoate to 2-octaprenylphenol, an intermediate step in ubiquinone biosynthesis. The polypeptide is 3-octaprenyl-4-hydroxybenzoate carboxy-lyase (Legionella pneumophila (strain Corby)).